The chain runs to 207 residues: ATP-dependent Clp protease proteolytic subunit (207 aa).

Ser111 functions as the Nucleophile in the catalytic mechanism. The active site involves His136.

Belongs to the peptidase S14 family. As to quaternary structure, fourteen ClpP subunits assemble into 2 heptameric rings which stack back to back to give a disk-like structure with a central cavity, resembling the structure of eukaryotic proteasomes.

It localises to the cytoplasm. It catalyses the reaction Hydrolysis of proteins to small peptides in the presence of ATP and magnesium. alpha-casein is the usual test substrate. In the absence of ATP, only oligopeptides shorter than five residues are hydrolyzed (such as succinyl-Leu-Tyr-|-NHMec, and Leu-Tyr-Leu-|-Tyr-Trp, in which cleavage of the -Tyr-|-Leu- and -Tyr-|-Trp bonds also occurs).. Functionally, cleaves peptides in various proteins in a process that requires ATP hydrolysis. Has a chymotrypsin-like activity. Plays a major role in the degradation of misfolded proteins. The protein is ATP-dependent Clp protease proteolytic subunit of Photorhabdus laumondii subsp. laumondii (strain DSM 15139 / CIP 105565 / TT01) (Photorhabdus luminescens subsp. laumondii).